The sequence spans 978 residues: Mast/stem cell growth factor receptor Kit (978 aa).

The first 25 residues, M1–S25, serve as a signal peptide directing secretion. The Extracellular segment spans residues Q26–P525. Ig-like C2-type domains follow at residues P27–R112, D121–R205, P212–V309, P318–N411, and P414–A508. C58 and C97 are joined by a disulfide. 3 N-linked (GlcNAc...) asparagine glycosylation sites follow: N94, N130, and N145. 3 cysteine pairs are disulfide-bonded: C136–C186, C151–C183, and C233–C291. 9 N-linked (GlcNAc...) asparagine glycosylation sites follow: N284, N294, N301, N321, N353, N368, N401, N464, and N487. C429 and C492 are joined by a disulfide. A helical transmembrane segment spans residues L526–Y546. Topologically, residues K547 to V978 are cytoplasmic. Phosphotyrosine occurs at positions 548 and 554. Y569 is a Mg(2+) binding site. 2 positions are modified to phosphotyrosine; by autocatalysis: Y569 and Y571. The important for interaction with phosphotyrosine-binding proteins stretch occupies residues Y569–Y571. The Protein kinase domain occupies L590–S939. ATP contacts are provided by residues G597–V604, K624, and E672–D678. 2 positions are modified to phosphotyrosine; by autocatalysis: Y704 and Y722. At Y731 the chain carries Phosphotyrosine. S743 and S748 each carry phosphoserine; by PKC/PRKCA. D794 (proton acceptor) is an active-site residue. Position 798 (R798) interacts with ATP. Mg(2+) is bound by residues N799 and D812. S823 carries the phosphoserine modification. A Phosphotyrosine; by autocatalysis modification is found at Y825. Position 893 is a phosphoserine (S893). A Phosphotyrosine modification is found at Y902. Y938 carries the post-translational modification Phosphotyrosine; by autocatalysis. At S961 the chain carries Phosphoserine.

This sequence belongs to the protein kinase superfamily. Tyr protein kinase family. CSF-1/PDGF receptor subfamily. In terms of assembly, monomer in the absence of bound KITLG/SCF. Homodimer in the presence of bound KITLG/SCF, forming a heterotetramer with two KITLG/SCF molecules. Interacts (via phosphorylated tyrosine residues) with the adapter proteins GRB2 and GRB7 (via SH2 domain), and SH2B2/APS. Interacts (via C-terminus) with MPDZ (via the tenth PDZ domain). Interacts (via phosphorylated tyrosine residues) with PIK3R1 and PIK3CD. Interacts (via phosphorylated tyrosine) with CRK (isoform Crk-II), FYN, SHC1 and MATK/CHK (via SH2 domain). Interacts with LYN and FES/FPS. Interacts (via phosphorylated tyrosine residues) with the protein phosphatases PTPN6/SHP-1 (via SH2 domain), PTPN11/SHP-2 (via SH2 domain) and PTPRU. Interacts with PLCG1. Interacts with DOK1 and TEC. Interacts with IL1RAP (independent of stimulation with KITLG/SCF). A mast cell-specific KITLG/SCF-induced interleukin-33 signaling complex contains IL1RL1, IL1RAP, KIT and MYD88. Post-translationally, ubiquitinated by SOCS6. KIT is rapidly ubiquitinated after autophosphorylation induced by KITLG/SCF binding, leading to internalization and degradation. Autophosphorylated on tyrosine residues. KITLG/SCF binding promotes autophosphorylation. Phosphorylated tyrosine residues are important for interaction with specific binding partners.

Its subcellular location is the cell membrane. It catalyses the reaction L-tyrosyl-[protein] + ATP = O-phospho-L-tyrosyl-[protein] + ADP + H(+). Its activity is regulated as follows. Present in an inactive conformation in the absence of bound ligand. KITLG/SCF binding leads to dimerization and activation by autophosphorylation on tyrosine residues. Activity is down-regulated by PRKCA-mediated phosphorylation on serine residues. In terms of biological role, tyrosine-protein kinase that acts as a cell-surface receptor for the cytokine KITLG/SCF and plays an essential role in the regulation of cell survival and proliferation, hematopoiesis, stem cell maintenance, gametogenesis, mast cell development, migration and function, and in melanogenesis. In response to KITLG/SCF binding, KIT can activate several signaling pathways. Phosphorylates PIK3R1, PLCG1, SH2B2/APS and CBL. Activates the AKT1 signaling pathway by phosphorylation of PIK3R1, the regulatory subunit of phosphatidylinositol 3-kinase. Activated KIT also transmits signals via GRB2 and activation of RAS, RAF1 and the MAP kinases MAPK1/ERK2 and/or MAPK3/ERK1. Promotes activation of STAT family members STAT1, STAT3, STAT5A and STAT5B. Activation of PLCG1 leads to the production of the cellular signaling molecules diacylglycerol and inositol 1,4,5-trisphosphate. KIT signaling is modulated by protein phosphatases, and by rapid internalization and degradation of the receptor. Activated KIT promotes phosphorylation of the protein phosphatases PTPN6/SHP-1 and PTPRU, and of the transcription factors STAT1, STAT3, STAT5A and STAT5B. Promotes phosphorylation of PIK3R1, CBL, CRK (isoform Crk-II), LYN, MAPK1/ERK2 and/or MAPK3/ERK1, PLCG1, SRC and SHC1. This Capra hircus (Goat) protein is Mast/stem cell growth factor receptor Kit (KIT).